A 304-amino-acid chain; its full sequence is Porphobilinogen deaminase (304 aa).

At cysteine 240 the chain carries S-(dipyrrolylmethanemethyl)cysteine.

This sequence belongs to the HMBS family. In terms of assembly, monomer. The cofactor is dipyrromethane.

The enzyme catalyses 4 porphobilinogen + H2O = hydroxymethylbilane + 4 NH4(+). It participates in porphyrin-containing compound metabolism; protoporphyrin-IX biosynthesis; coproporphyrinogen-III from 5-aminolevulinate: step 2/4. Functionally, tetrapolymerization of the monopyrrole PBG into the hydroxymethylbilane pre-uroporphyrinogen in several discrete steps. The protein is Porphobilinogen deaminase of Xanthomonas oryzae pv. oryzae (strain MAFF 311018).